The following is a 500-amino-acid chain: Gamma-glutamylanilide synthase (500 aa).

Residues 32-136 (LGLEMIRLSW…MLADLHWKSG (105 aa)) enclose the GS beta-grasp domain. The GS catalytic domain maps to 143–500 (PRGIMKKAVK…WEQKEYFNLL (358 aa)).

This sequence belongs to the glutamine synthetase family. In terms of assembly, homohexamer.

The enzyme catalyses aniline + L-glutamate + ATP = N(5)-phenyl-L-glutamine + ADP + phosphate. Functionally, involved in the initial oxidation of aniline to catechol by the release of its amino group. Catalyzes the ATP-dependent ligation of L-glutamate to aniline to yield gamma-glutamylanilide (gamma-GA). AtdA1 has a broad substrate range and is able to convert the following anilines, including chlorinated and methylated forms of aniline: aniline (100%), o-chloroaniline (92%), m-chloroaniline (69%), p-chloroaniline (92%), o-methylaniline (40%), m-methylaniline (27%) and p-methylaniline (45%). This is Gamma-glutamylanilide synthase from Acinetobacter sp.